A 137-amino-acid chain; its full sequence is MLLPKRTKYRRPHRIKYEGKAKGNTKVDFGEFGLKSLDGAWITNRQIEAARIAMTRYMKRWGKVWIRIFPHMAKTKKPLEVRMGSGKGSPEEWVAVVKTGTVMFEVAGVSEETALEALRLAMHKLPVRCKIVKKGEE.

Belongs to the universal ribosomal protein uL16 family. Part of the 50S ribosomal subunit.

Its function is as follows. Binds 23S rRNA and is also seen to make contacts with the A and possibly P site tRNAs. This Spiroplasma kunkelii protein is Large ribosomal subunit protein uL16.